A 987-amino-acid chain; its full sequence is Pentatricopeptide repeat-containing protein At1g06710, mitochondrial (987 aa).

The N-terminal 42 residues, 1–42, are a transit peptide targeting the mitochondrion; that stretch reads MNKTVVRCLLSRSHHPLIHFSTNLSLLHRVFTCSRYLTARFM. PPR repeat units lie at residues 164–198, 199–233, 234–268, 269–299, 301–335, 336–370, 371–405, 406–446, 447–481, 482–516, 517–551, 552–586, 587–621, 638–672, 673–707, 708–742, 743–777, 778–812, 813–847, 881–915, 918–952, and 953–987; these read TAPV…DKEV, FGEF…RFRP, SRST…NLRM, DGFT…ENFV, DTVF…SCLP, NVVT…GCYP, SPKI…GHMP, GYVV…GVVL, NKIN…GFIP, DTST…GLVA, DVYT…GCTP, NVVT…GCLP, NIVT…KDVP, NVVT…GCEP, NQIV…GFPA, TLYT…SCAP, NVVI…GCQP, NVVT…GVAP, NYVT…HWPT, FLSV…SATL, YSST…GVIP, and EMQS…VCPL.

The protein belongs to the PPR family. P subfamily.

It is found in the mitochondrion. The polypeptide is Pentatricopeptide repeat-containing protein At1g06710, mitochondrial (Arabidopsis thaliana (Mouse-ear cress)).